The following is a 464-amino-acid chain: Gamma-aminobutyric acid receptor subunit alpha-5 (464 aa).

Residues 1–25 form the signal peptide; it reads MDNGMLSRFIMTKTLLVFCISMTLS. The Extracellular segment spans residues 26 to 260; that stretch reads SHFGFSQMPT…FHLKRKIGYF (235 aa). Asparagine 45 is a glycosylation site (N-linked (GlcNAc...) asparagine). Arginine 101 lines the 4-aminobutanoate pocket. Residue asparagine 145 is glycosylated (N-linked (GlcNAc...) asparagine). 4-aminobutanoate is bound at residue threonine 164. Cysteine 173 and cysteine 187 are disulfide-bonded. N-linked (GlcNAc...) asparagine glycans are attached at residues asparagine 207 and asparagine 236. Helical transmembrane passes span 261-281, 287-308, and 319-340; these read VIQT…SFWL, PART…ISAR, and AMDW…EFAT. Residues 341–429 are Cytoplasmic-facing; that stretch reads VNYFTKRGWA…TYNSISKIDK (89 aa). Residue lysine 355 forms a Glycyl lysine isopeptide (Lys-Gly) (interchain with G-Cter in ubiquitin) linkage. Residues 382–414 form a disordered region; that stretch reads KLTHPPNIPKEQLPGGTGNAVGTASIRASEEKT. A helical membrane pass occupies residues 430–450; it reads MSRIVFPILFGTFNLVYWATY.

This sequence belongs to the ligand-gated ion channel (TC 1.A.9) family. Gamma-aminobutyric acid receptor (TC 1.A.9.5) subfamily. GABRA5 sub-subfamily. Heteropentamer, formed by a combination of alpha (GABRA1-6), beta (GABRB1-3), gamma (GABRG1-3), delta (GABRD), epsilon (GABRE), rho (GABRR1-3), pi (GABRP) and theta (GABRQ) chains, each subunit exhibiting distinct physiological and pharmacological properties. In terms of tissue distribution, expressed in brain areas such as cerebral cortex, hippocampal formation and olfactory bulb granular layer.

Its subcellular location is the postsynaptic cell membrane. It is found in the cell membrane. The catalysed reaction is chloride(in) = chloride(out). With respect to regulation, allosterically potentiated by alphaxalone. Allosterically inhibited by pregnenolone sulfate. Inhibited by zinc and lanthanum. In terms of biological role, alpha subunit of the heteropentameric ligand-gated chloride channel gated by gamma-aminobutyric acid (GABA), a major inhibitory neurotransmitter in the brain. GABA-gated chloride channels, also named GABA(A) receptors (GABAAR), consist of five subunits arranged around a central pore and contain GABA active binding site(s) located at the alpha and beta subunit interface(s). When activated by GABA, GABAARs selectively allow the flow of chloride anions across the cell membrane down their electrochemical gradient. GABAARs containing alpha-5/GABRA5 subunits are mainly extrasynaptic and contribute to the tonic GABAergic inhibition in the hippocampus. Extrasynaptic alpha-5-containing GABAARs in CA1 pyramidal neurons play a role in learning and memory processes. The chain is Gamma-aminobutyric acid receptor subunit alpha-5 from Rattus norvegicus (Rat).